We begin with the raw amino-acid sequence, 109 residues long: U4-lycotoxin-Ls1d (109 aa).

Positions 1 to 22 (MKVLVLFSVLFLTLFSYSSTEA) are cleaved as a signal peptide. The propeptide occupies 23 to 44 (MDEFDSDAEEDMLSLMANEQVR). The interval 45–88 (AKACTPRLHDCSHDRHSCCRGELFKDVCYCFYPEGEDKTEVCSC) is knottin domain. Disulfide bonds link C48/C63, C55/C72, C62/C88, and C74/C86. The tract at residues 89–108 (QQPKSHKYIEKVVDKARTVV) is linear cationic cytotoxin domain.

The protein belongs to the neurotoxin 19 (CSTX) family. 05 (U4-Lctx) subfamily. Expressed by the venom gland.

The protein localises to the secreted. In terms of biological role, enhances the high-affinity desensitization of human P2RX3 purinoceptors. The chain is U4-lycotoxin-Ls1d from Lycosa singoriensis (Wolf spider).